A 492-amino-acid chain; its full sequence is Citrate synthase, peroxisomal (492 aa).

Residues His307, His346, and Asp402 contribute to the active site. The tract at residues 469–492 (PAKVRSQDSYSSATTKRYSKVTSH) is disordered. Positions 475 to 484 (QDSYSSATTK) are enriched in polar residues.

The protein belongs to the citrate synthase family.

It is found in the peroxisome. The enzyme catalyses oxaloacetate + acetyl-CoA + H2O = citrate + CoA + H(+). Its pathway is carbohydrate metabolism; tricarboxylic acid cycle; isocitrate from oxaloacetate: step 1/2. Peroxisomal protein involved in the cellular biosynthesis of citrate, and required primarily for cell growth and modulation of multicellular development. This chain is Citrate synthase, peroxisomal (cshA), found in Dictyostelium discoideum (Social amoeba).